The chain runs to 381 residues: Heme A synthase (381 aa).

The next 5 helical transmembrane spans lie at 25–45 (GAVR…VAVG), 112–132 (LLGR…WWRG), 138–158 (LLLG…IGWI), 176–196 (LALH…LAAG), and 212–232 (VAGL…LVAG). Residue His-277 participates in heme binding. The next 3 membrane-spanning stretches (helical) occupy residues 279-299 (LFAY…VRMA), 307-327 (AMGV…TLLL), and 329-349 (VPLW…IMAT). Residue His-337 participates in heme binding.

Belongs to the COX15/CtaA family. Type 2 subfamily. As to quaternary structure, interacts with CtaB. Heme b is required as a cofactor.

The protein resides in the cell membrane. The catalysed reaction is Fe(II)-heme o + 2 A + H2O = Fe(II)-heme a + 2 AH2. It functions in the pathway porphyrin-containing compound metabolism; heme A biosynthesis; heme A from heme O: step 1/1. Functionally, catalyzes the conversion of heme O to heme A by two successive hydroxylations of the methyl group at C8. The first hydroxylation forms heme I, the second hydroxylation results in an unstable dihydroxymethyl group, which spontaneously dehydrates, resulting in the formyl group of heme A. The protein is Heme A synthase of Methylorubrum populi (strain ATCC BAA-705 / NCIMB 13946 / BJ001) (Methylobacterium populi).